A 260-amino-acid chain; its full sequence is Carbonic anhydrase (260 aa).

Residues 1 to 31 form a disordered region; the sequence is MAHAWGYGPADGPESWAESFPIANGPRQSPI. The region spanning 3 to 259 is the Alpha-carbonic anhydrase domain; that stretch reads HAWGYGPADG…LKGRKVRASF (257 aa). The active-site Proton acceptor is histidine 64. 3 residues coordinate Zn(2+): histidine 94, histidine 96, and histidine 119. Residue tyrosine 127 is part of the active site. A substrate-binding site is contributed by 198–199; that stretch reads TT.

This sequence belongs to the alpha-carbonic anhydrase family. Zn(2+) serves as cofactor.

It catalyses the reaction hydrogencarbonate + H(+) = CO2 + H2O. In terms of biological role, reversible hydration of carbon dioxide. This is Carbonic anhydrase (cahz) from Danio rerio (Zebrafish).